The primary structure comprises 430 residues: Adenylosuccinate synthetase (430 aa).

GTP contacts are provided by residues 12–18 (GDEGKGK) and 40–42 (GHT). Catalysis depends on Asp13, which acts as the Proton acceptor. Residues Asp13 and Gly40 each contribute to the Mg(2+) site. IMP is bound by residues 13–16 (DEGK), 38–41 (NAGH), Thr130, Arg144, Gln224, Thr239, and Arg303. Catalysis depends on His41, which acts as the Proton donor. 299-305 (VNTGRKR) is a substrate binding site. GTP contacts are provided by residues Arg305, 331–333 (KLD), and 413–415 (STS).

This sequence belongs to the adenylosuccinate synthetase family. As to quaternary structure, homodimer. The cofactor is Mg(2+).

The protein localises to the cytoplasm. The enzyme catalyses IMP + L-aspartate + GTP = N(6)-(1,2-dicarboxyethyl)-AMP + GDP + phosphate + 2 H(+). It functions in the pathway purine metabolism; AMP biosynthesis via de novo pathway; AMP from IMP: step 1/2. Functionally, plays an important role in the de novo pathway of purine nucleotide biosynthesis. Catalyzes the first committed step in the biosynthesis of AMP from IMP. This chain is Adenylosuccinate synthetase, found in Rhodopseudomonas palustris (strain BisA53).